The primary structure comprises 83 residues: NAD(P)H-quinone oxidoreductase subunit L (83 aa).

2 helical membrane passes run 15 to 35 (LLVL…VPLA) and 53 to 73 (LGIY…APFL).

Belongs to the complex I NdhL subunit family. In terms of assembly, NDH-1 can be composed of about 15 different subunits; different subcomplexes with different compositions have been identified which probably have different functions.

The protein localises to the cellular thylakoid membrane. It catalyses the reaction a plastoquinone + NADH + (n+1) H(+)(in) = a plastoquinol + NAD(+) + n H(+)(out). The catalysed reaction is a plastoquinone + NADPH + (n+1) H(+)(in) = a plastoquinol + NADP(+) + n H(+)(out). In terms of biological role, NDH-1 shuttles electrons from an unknown electron donor, via FMN and iron-sulfur (Fe-S) centers, to quinones in the respiratory and/or the photosynthetic chain. The immediate electron acceptor for the enzyme in this species is believed to be plastoquinone. Couples the redox reaction to proton translocation, and thus conserves the redox energy in a proton gradient. Cyanobacterial NDH-1 also plays a role in inorganic carbon-concentration. This chain is NAD(P)H-quinone oxidoreductase subunit L, found in Synechococcus sp. (strain CC9605).